Consider the following 254-residue polypeptide: Type III pantothenate kinase (254 aa).

6–13 (DVGNSNIV) serves as a coordination point for ATP. Substrate is bound by residues Tyr-100 and 107–110 (GADR). Asp-109 functions as the Proton acceptor in the catalytic mechanism. K(+) is bound at residue Asp-129. ATP is bound at residue Thr-132. Thr-184 contributes to the substrate binding site.

It belongs to the type III pantothenate kinase family. Homodimer. Requires NH4(+) as cofactor. The cofactor is K(+).

It is found in the cytoplasm. The enzyme catalyses (R)-pantothenate + ATP = (R)-4'-phosphopantothenate + ADP + H(+). It participates in cofactor biosynthesis; coenzyme A biosynthesis; CoA from (R)-pantothenate: step 1/5. Catalyzes the phosphorylation of pantothenate (Pan), the first step in CoA biosynthesis. This chain is Type III pantothenate kinase, found in Geobacter sp. (strain M21).